The chain runs to 132 residues: Transmembrane protein C1orf162 homolog (132 aa).

A helical transmembrane segment spans residues 36 to 56 (IILAFFAGVLLTLLIVALIFL). The segment at 95-132 (TFKPPEENSNDLTRNHSSGLEPTIYSQIKVTDSDLPLP) is disordered. Polar residues predominate over residues 104–124 (NDLTRNHSSGLEPTIYSQIKV). Residue serine 111 is modified to Phosphoserine.

It localises to the membrane. The chain is Transmembrane protein C1orf162 homolog from Mus musculus (Mouse).